The sequence spans 95 residues: Aspartyl/glutamyl-tRNA(Asn/Gln) amidotransferase subunit C (95 aa).

Belongs to the GatC family. As to quaternary structure, heterotrimer of A, B and C subunits.

It carries out the reaction L-glutamyl-tRNA(Gln) + L-glutamine + ATP + H2O = L-glutaminyl-tRNA(Gln) + L-glutamate + ADP + phosphate + H(+). The catalysed reaction is L-aspartyl-tRNA(Asn) + L-glutamine + ATP + H2O = L-asparaginyl-tRNA(Asn) + L-glutamate + ADP + phosphate + 2 H(+). Functionally, allows the formation of correctly charged Asn-tRNA(Asn) or Gln-tRNA(Gln) through the transamidation of misacylated Asp-tRNA(Asn) or Glu-tRNA(Gln) in organisms which lack either or both of asparaginyl-tRNA or glutaminyl-tRNA synthetases. The reaction takes place in the presence of glutamine and ATP through an activated phospho-Asp-tRNA(Asn) or phospho-Glu-tRNA(Gln). This Chromobacterium violaceum (strain ATCC 12472 / DSM 30191 / JCM 1249 / CCUG 213 / NBRC 12614 / NCIMB 9131 / NCTC 9757 / MK) protein is Aspartyl/glutamyl-tRNA(Asn/Gln) amidotransferase subunit C.